Reading from the N-terminus, the 778-residue chain is Ribosome biogenesis protein BOP1 homolog (778 aa).

The segment covering 1–10 (MAKKQDRKRK) has biased composition (basic residues). Residues 1–152 (MAKKQDRKRK…DSDTSDEEDI (152 aa)) form a disordered region. 3 stretches are compositionally biased toward acidic residues: residues 44–53 (EDSTDDEGID), 60–72 (SSED…DEEG), and 84–105 (SSDE…DEEE). Positions 114–124 (TTSSKAETNNE) are enriched in polar residues. The span at 142–151 (EDSDTSDEED) shows a compositional bias: acidic residues. WD repeat units lie at residues 438 to 479 (GHTD…RTIE), 481 to 519 (EDVV…KLLI), 564 to 606 (NHFK…SQIP), 609 to 647 (KSKG…LIKK), 650 to 689 (TNSK…KPYQ), 693 to 732 (LHRN…DLLQ), and 748 to 778 (RDDF…RLYT).

It belongs to the WD repeat BOP1/ERB1 family.

The protein resides in the nucleus. The protein localises to the nucleolus. It is found in the nucleoplasm. In terms of biological role, required for maturation of ribosomal RNAs and formation of the large ribosomal subunit. The chain is Ribosome biogenesis protein BOP1 homolog from Drosophila willistoni (Fruit fly).